Reading from the N-terminus, the 274-residue chain is Cytochrome c oxidase subunit 3 (274 aa).

The next 7 helical transmembrane spans lie at 22–42, 47–67, 93–113, 137–157, 170–190, 208–228, and 248–268; these read PSPWPLGASVACLILTLGGVM, FAAGDIGLPLGLILVLASMLL, GVVLFIVSEILLFFSLFWAFF, PFEVPLLNTIILLTSGCTITV, TILYLILTILLAWMFLGLQWV, FFVATGFHGLHVMIGTIFLTV, and AAIWYWHVVDVIWLFLYVSVY.

Belongs to the cytochrome c oxidase subunit 3 family. In terms of assembly, component of the cytochrome c oxidase (complex IV, CIV), a multisubunit enzyme composed of a catalytic core of 3 subunits and several supernumerary subunits. The complex exists as a monomer or a dimer and forms supercomplexes (SCs) in the inner mitochondrial membrane with ubiquinol-cytochrome c oxidoreductase (cytochrome b-c1 complex, complex III, CIII).

The protein localises to the mitochondrion inner membrane. It catalyses the reaction 4 Fe(II)-[cytochrome c] + O2 + 8 H(+)(in) = 4 Fe(III)-[cytochrome c] + 2 H2O + 4 H(+)(out). In terms of biological role, component of the cytochrome c oxidase, the last enzyme in the mitochondrial electron transport chain which drives oxidative phosphorylation. The respiratory chain contains 3 multisubunit complexes succinate dehydrogenase (complex II, CII), ubiquinol-cytochrome c oxidoreductase (cytochrome b-c1 complex, complex III, CIII) and cytochrome c oxidase (complex IV, CIV), that cooperate to transfer electrons derived from NADH and succinate to molecular oxygen, creating an electrochemical gradient over the inner membrane that drives transmembrane transport and the ATP synthase. Cytochrome c oxidase is the component of the respiratory chain that catalyzes the reduction of oxygen to water. Electrons originating from reduced cytochrome c in the intermembrane space (IMS) are transferred via the dinuclear copper A center (CU(A)) of subunit 2 and heme A of subunit 1 to the active site in subunit 1, a binuclear center (BNC) formed by heme A3 and copper B (CU(B)). The BNC reduces molecular oxygen to 2 water molecules using 4 electrons from cytochrome c in the IMS and 4 protons from the mitochondrial matrix. This Allomyces macrogynus protein is Cytochrome c oxidase subunit 3 (COX3).